Consider the following 160-residue polypeptide: SsrA-binding protein (160 aa).

It belongs to the SmpB family.

The protein resides in the cytoplasm. In terms of biological role, required for rescue of stalled ribosomes mediated by trans-translation. Binds to transfer-messenger RNA (tmRNA), required for stable association of tmRNA with ribosomes. tmRNA and SmpB together mimic tRNA shape, replacing the anticodon stem-loop with SmpB. tmRNA is encoded by the ssrA gene; the 2 termini fold to resemble tRNA(Ala) and it encodes a 'tag peptide', a short internal open reading frame. During trans-translation Ala-aminoacylated tmRNA acts like a tRNA, entering the A-site of stalled ribosomes, displacing the stalled mRNA. The ribosome then switches to translate the ORF on the tmRNA; the nascent peptide is terminated with the 'tag peptide' encoded by the tmRNA and targeted for degradation. The ribosome is freed to recommence translation, which seems to be the essential function of trans-translation. The chain is SsrA-binding protein from Mycobacterium bovis (strain ATCC BAA-935 / AF2122/97).